The following is a 150-amino-acid chain: Large ribosomal subunit protein bL9 (150 aa).

This sequence belongs to the bacterial ribosomal protein bL9 family.

Functionally, binds to the 23S rRNA. The chain is Large ribosomal subunit protein bL9 from Shewanella oneidensis (strain ATCC 700550 / JCM 31522 / CIP 106686 / LMG 19005 / NCIMB 14063 / MR-1).